The primary structure comprises 246 residues: 3-deoxy-manno-octulosonate cytidylyltransferase (246 aa).

This sequence belongs to the KdsB family.

The protein localises to the cytoplasm. The catalysed reaction is 3-deoxy-alpha-D-manno-oct-2-ulosonate + CTP = CMP-3-deoxy-beta-D-manno-octulosonate + diphosphate. It participates in nucleotide-sugar biosynthesis; CMP-3-deoxy-D-manno-octulosonate biosynthesis; CMP-3-deoxy-D-manno-octulosonate from 3-deoxy-D-manno-octulosonate and CTP: step 1/1. It functions in the pathway bacterial outer membrane biogenesis; lipopolysaccharide biosynthesis. In terms of biological role, activates KDO (a required 8-carbon sugar) for incorporation into bacterial lipopolysaccharide in Gram-negative bacteria. The sequence is that of 3-deoxy-manno-octulosonate cytidylyltransferase from Rickettsia prowazekii (strain Madrid E).